The chain runs to 382 residues: Queuine tRNA-ribosyltransferase (382 aa).

Catalysis depends on Asp-93, which acts as the Proton acceptor. Substrate-binding positions include 93–97 (DSGGF), Asp-147, Gln-191, and Gly-218. The segment at 249–255 (GVGKPED) is RNA binding. The active-site Nucleophile is Asp-268. Residues 273–277 (TRNAR) form an RNA binding; important for wobble base 34 recognition region. Residues Cys-306, Cys-308, Cys-311, and His-337 each coordinate Zn(2+).

The protein belongs to the queuine tRNA-ribosyltransferase family. Homodimer. Within each dimer, one monomer is responsible for RNA recognition and catalysis, while the other monomer binds to the replacement base PreQ1. The cofactor is Zn(2+).

It catalyses the reaction 7-aminomethyl-7-carbaguanine + guanosine(34) in tRNA = 7-aminomethyl-7-carbaguanosine(34) in tRNA + guanine. Its pathway is tRNA modification; tRNA-queuosine biosynthesis. Catalyzes the base-exchange of a guanine (G) residue with the queuine precursor 7-aminomethyl-7-deazaguanine (PreQ1) at position 34 (anticodon wobble position) in tRNAs with GU(N) anticodons (tRNA-Asp, -Asn, -His and -Tyr). Catalysis occurs through a double-displacement mechanism. The nucleophile active site attacks the C1' of nucleotide 34 to detach the guanine base from the RNA, forming a covalent enzyme-RNA intermediate. The proton acceptor active site deprotonates the incoming PreQ1, allowing a nucleophilic attack on the C1' of the ribose to form the product. After dissociation, two additional enzymatic reactions on the tRNA convert PreQ1 to queuine (Q), resulting in the hypermodified nucleoside queuosine (7-(((4,5-cis-dihydroxy-2-cyclopenten-1-yl)amino)methyl)-7-deazaguanosine). This Haemophilus influenzae (strain 86-028NP) protein is Queuine tRNA-ribosyltransferase.